Consider the following 264-residue polypeptide: Occludin/ELL domain-containing protein 1 (264 aa).

Residues 1–10 (MHNPDGSASP) show a composition bias toward polar residues. A disordered region spans residues 1-112 (MHNPDGSASP…QPGPHKAKTK (112 aa)). The span at 96-105 (PRPPCQPQPG) shows a compositional bias: pro residues. The OCEL domain maps to 147 to 257 (PDYELKYPPV…QIQKFDDQGD (111 aa)).

Belongs to the ELL/occludin family.

This chain is Occludin/ELL domain-containing protein 1 (OCEL1), found in Homo sapiens (Human).